We begin with the raw amino-acid sequence, 227 residues long: tRNA pseudouridine synthase B (227 aa).

The Nucleophile role is filled by D42.

Belongs to the pseudouridine synthase TruB family. Type 1 subfamily.

The catalysed reaction is uridine(55) in tRNA = pseudouridine(55) in tRNA. Responsible for synthesis of pseudouridine from uracil-55 in the psi GC loop of transfer RNAs. The protein is tRNA pseudouridine synthase B of Ureaplasma parvum serovar 3 (strain ATCC 27815 / 27 / NCTC 11736).